The following is a 124-amino-acid chain: Small ribosomal subunit protein uS10 (124 aa).

The protein belongs to the universal ribosomal protein uS10 family.

The sequence is that of Small ribosomal subunit protein uS10 (rps20) from Dictyostelium discoideum (Social amoeba).